Consider the following 233-residue polypeptide: Orotidine 5'-phosphate decarboxylase (233 aa).

Substrate-binding positions include Asp-13, Lys-35, Asp-62–Thr-71, Thr-122, Arg-182, Gln-191, Gly-211, and Arg-212. Catalysis depends on Lys-64, which acts as the Proton donor.

It belongs to the OMP decarboxylase family. Type 1 subfamily. Homodimer.

The enzyme catalyses orotidine 5'-phosphate + H(+) = UMP + CO2. It participates in pyrimidine metabolism; UMP biosynthesis via de novo pathway; UMP from orotate: step 2/2. Its function is as follows. Catalyzes the decarboxylation of orotidine 5'-monophosphate (OMP) to uridine 5'-monophosphate (UMP). This Pseudomonas putida (strain GB-1) protein is Orotidine 5'-phosphate decarboxylase.